We begin with the raw amino-acid sequence, 669 residues long: Probable L-type lectin-domain containing receptor kinase I.2 (669 aa).

Positions 1 to 24 (MAQRFYLLLLLLIFLVNLICFSSQ) are cleaved as a signal peptide. At 25–295 (QDLSFVFNGF…FTEQKRKRSP (271 aa)) the chain is on the extracellular side. The tract at residues 26–266 (DLSFVFNGFN…NQYILGWSFS (241 aa)) is legume-lectin like. N-linked (GlcNAc...) asparagine glycosylation is found at N132, N189, N212, and N233. A helical transmembrane segment spans residues 296–316 (LLIVLLVILTLVVIGGLGGYY). Residues 317 to 669 (LYRRKKYAEV…SHTILNGDGR (353 aa)) lie on the Cytoplasmic side of the membrane. A Protein kinase domain is found at 351–609 (FNKDGRLGKG…MQYINRDQAL (259 aa)). ATP is bound by residues 357 to 365 (LGKGGFGEV) and K379. The active-site Proton acceptor is the D475.

This sequence in the C-terminal section; belongs to the protein kinase superfamily. Ser/Thr protein kinase family. It in the N-terminal section; belongs to the leguminous lectin family.

It localises to the cell membrane. The catalysed reaction is L-seryl-[protein] + ATP = O-phospho-L-seryl-[protein] + ADP + H(+). It carries out the reaction L-threonyl-[protein] + ATP = O-phospho-L-threonyl-[protein] + ADP + H(+). Functionally, involved in resistance response to the pathogenic fungus Alternaria brassicicola. The protein is Probable L-type lectin-domain containing receptor kinase I.2 of Arabidopsis thaliana (Mouse-ear cress).